We begin with the raw amino-acid sequence, 137 residues long: Thionin BTH7 (137 aa).

The signal sequence occupies residues Met1–Gly28. Intrachain disulfides connect Cys31–Cys68, Cys32–Cys60, Cys40–Cys58, and Cys44–Cys54. Positions Leu75–Ala137 are cleaved as a propeptide — acidic domain.

This sequence belongs to the plant thionin (TC 1.C.44) family. 4 C-C subfamily.

The protein resides in the secreted. Its function is as follows. Thionins are small plant proteins which are toxic to animal cells. They seem to exert their toxic effect at the level of the cell membrane. Their precise function is not known. The chain is Thionin BTH7 from Hordeum vulgare (Barley).